We begin with the raw amino-acid sequence, 260 residues long: MMGFGASALESIEGEEALEVPGPPPEPRAPEPRAPEPEPGLDLSLSPSPLPESPKARKSSPGQRKGRRGGSRRGRQVRFQLAPPSPVRSEPLLVAGAPGDDHELEAPALQSSLALSLELQNARAAVASGQFDASKAVEEQLRKSFRTRCALEETVAEGLNVPRSKRLYRDLVSLQVPEEQVLNAALREKLAMLPPQPRAPPLKEVLGPGPDMTMLCNPDSLWSESPHLTVDGLPPLRLQARPRPSEDTFLMHRMLRRWEA.

Residues 1–100 (MMGFGASALE…PLLVAGAPGD (100 aa)) form a disordered region. Phosphoserine is present on residues Ser46 and Ser53. Over residues 64-76 (RKGRRGGSRRGRQ) the composition is skewed to basic residues.

This sequence belongs to the PPP1R35 family. Interacts with PPP1CA; this interaction mediates the PPP1CA phosphatase activity inhibition. Interacts with RTTN; this interaction allows the mutual recruitment to the centriole.

It localises to the cytoplasm. Its subcellular location is the cytoskeleton. The protein localises to the microtubule organizing center. The protein resides in the centrosome. It is found in the centriole. In terms of biological role, during centriole duplication, plays a role in the centriole elongation by promoting the recruitment of the microtubule-binding elongation machinery through its interaction with TTTN, leading to the centriole to centrosome conversion. In addition may play a role in the primary cilia assembly. The polypeptide is Protein phosphatase 1 regulatory subunit 35 (Mus musculus (Mouse)).